The following is a 677-amino-acid chain: DNA ligase (677 aa).

Residues 38–42 (DYDFD), 87–88 (SL), and Glu-121 each bind NAD(+). Lys-123 acts as the N6-AMP-lysine intermediate in catalysis. Residues Arg-144, Glu-187, Lys-300, and Lys-324 each contribute to the NAD(+) site. Zn(2+) contacts are provided by Cys-418, Cys-421, Cys-436, and Cys-442. One can recognise a BRCT domain in the interval 601–677 (LINSNFEGLS…ISEEEFEAML (77 aa)).

It belongs to the NAD-dependent DNA ligase family. LigA subfamily. The cofactor is Mg(2+). It depends on Mn(2+) as a cofactor.

It carries out the reaction NAD(+) + (deoxyribonucleotide)n-3'-hydroxyl + 5'-phospho-(deoxyribonucleotide)m = (deoxyribonucleotide)n+m + AMP + beta-nicotinamide D-nucleotide.. DNA ligase that catalyzes the formation of phosphodiester linkages between 5'-phosphoryl and 3'-hydroxyl groups in double-stranded DNA using NAD as a coenzyme and as the energy source for the reaction. It is essential for DNA replication and repair of damaged DNA. This is DNA ligase from Chlorobium luteolum (strain DSM 273 / BCRC 81028 / 2530) (Pelodictyon luteolum).